The chain runs to 691 residues: Zinc finger protein 770 (691 aa).

Residue Lys11 forms a Glycyl lysine isopeptide (Lys-Gly) (interchain with G-Cter in SUMO2) linkage. C2H2-type zinc fingers lie at residues Tyr27–His49, Phe55–His77, and Phe81–His103. Glycyl lysine isopeptide (Lys-Gly) (interchain with G-Cter in SUMO2) cross-links involve residues Lys112, Lys121, and Lys146. 3 C2H2-type zinc fingers span residues His160–His182, Phe188–His210, and Phe216–His238. A disordered region spans residues Pro258 to Glu277. Residue Lys262 forms a Glycyl lysine isopeptide (Lys-Gly) (interchain with G-Cter in SUMO2) linkage. A C2H2-type 7; degenerate zinc finger spans residues Phe294–Arg318. Glycyl lysine isopeptide (Lys-Gly) (interchain with G-Cter in SUMO2) cross-links involve residues Lys420 and Lys437. 4 consecutive C2H2-type zinc fingers follow at residues Cys475–His497, Phe503–His525, Tyr625–His647, and Phe653–His675. Lys683 participates in a covalent cross-link: Glycyl lysine isopeptide (Lys-Gly) (interchain with G-Cter in SUMO2).

The protein belongs to the krueppel C2H2-type zinc-finger protein family.

Its subcellular location is the nucleus. Its function is as follows. May be involved in transcriptional regulation. The protein is Zinc finger protein 770 (ZNF770) of Homo sapiens (Human).